Consider the following 161-residue polypeptide: NADH:FMN oxidoreductase (161 aa).

FMN contacts are provided by residues aspartate 30, 37 to 40 (AAST), 54 to 61 (CVQNSSTT), alanine 88, arginine 94, and phenylalanine 151.

It belongs to the non-flavoprotein flavin reductase family.

It is found in the cytoplasm. The enzyme catalyses FMNH2 + NAD(+) = FMN + NADH + 2 H(+). It catalyses the reaction FADH2 + NAD(+) = FAD + NADH + 2 H(+). It participates in sulfur metabolism; dibenzothiophene degradation. An NADH:FMN oxidoreductase which supplies reduced FMN for the '4S' desulfurization pathway that removes covalently bound sulfur from dibenzothiophene (DBT) without breaking carbon-carbon bonds. Can also use FAD. Provides DszC and probably also DszA (DBT-monooxygenase and DBTO2-monooxygenase respectively) with reduced flavin (FMN and/or FAD). This is NADH:FMN oxidoreductase from Mycolicibacterium goodii (Mycobacterium goodii).